A 474-amino-acid chain; its full sequence is Adenylyl cyclase-associated protein 1 (474 aa).

Alanine 2 is modified (N-acetylalanine). Phosphotyrosine is present on tyrosine 31. The residue at position 34 (serine 34) is a Phosphoserine. Position 80 is an N6-acetyllysine (lysine 80). Disordered stretches follow at residues 215–253 (ELSG…SASR) and 277–316 (MKTH…ATKK). Residues 217–227 (SGLPSGPSVGS) show a composition bias toward low complexity. Over residues 228–241 (GPPPPPPGPPPPPI) the composition is skewed to pro residues. N6-methyllysine is present on lysine 286. Serine 289, serine 294, and serine 300 each carry phosphoserine. Positions 299 to 311 (FSAPKPQTSPSPK) are enriched in pro residues. Position 306 is a phosphothreonine (threonine 306). Serine 307 and serine 309 each carry phosphoserine. One can recognise a C-CAP/cofactor C-like domain in the interval 312–452 (PATKKEPALL…EGGDFNEFPV (141 aa)). A Glycyl lysine isopeptide (Lys-Gly) (interchain with G-Cter in SUMO1) cross-link involves residue lysine 347.

This sequence belongs to the CAP family. Homodimer. Binds actin monomers. In terms of tissue distribution, ubiquitous.

Its subcellular location is the cell membrane. In terms of biological role, directly regulates filament dynamics and has been implicated in a number of complex developmental and morphological processes, including mRNA localization and the establishment of cell polarity. This chain is Adenylyl cyclase-associated protein 1 (Cap1), found in Mus musculus (Mouse).